Here is a 699-residue protein sequence, read N- to C-terminus: MSKINKLEHIRNIGICAHIDAGKTTTTERILYYTGKSHKIGEVHEGGATMDWMEQEQERGITITSAATTCRWQDKIINIIDTPGHVDFTIEVERSLRVLDGAVAVFDGVAGVEPQSETVWRQADKYNVPRMCFVNKMDRMGADFYRCVEMLKDRLGAKPLVIQLPVGIEENFKGIIDLIKMKAVIWKDEALGAEYFEEDIPADMKDKAEEYRAKLLDMVVELDDHVMEKYLSGEEVTAEEIKRLIRKGTISAVFYPVLCGSAFKNKGVQPLLDAVVDFLPSPIDIGIVKGREVSTGEEKDFLISVTEPFAALAFKIMNDPFVGSLTFIRIYSGKITSGTTVINTVKNKREKIGRMLLMHANNREDVKEASAGDIVALAGLKDTTTGDTLSDIDQQVILERMEFPEPVIELAVEPKSTADQEKMGLALSRLAAEDPSFRVSTDYETGQTVIKGMGELHLEIIIDRMRREFKVEANIGAPQVAYRETITKVCEIDYTHKKQSGGAGQFARVKIIFEPLKEVKDLKDEDKNKIFVFESKIIGGAVPKEYIPGVEKGLNNIRETGVIAVYPMIDFKATLVDGAFHDVDSSVLAFEIAAKAAFREGMPKGNPKLLEPIMQVEVITPDEYMGDIIGDLNSRRGQIQSMDPRGNAQVVTANVPLAEMFGYVNTLRSLSQGRAQFSMIFSHYDQVPSQVADIIKAKK.

The tr-type G domain maps to 8 to 283 (EHIRNIGICA…AVVDFLPSPI (276 aa)). Residues 17-24 (AHIDAGKT), 81-85 (DTPGH), and 135-138 (NKMD) each bind GTP.

It belongs to the TRAFAC class translation factor GTPase superfamily. Classic translation factor GTPase family. EF-G/EF-2 subfamily.

It localises to the cytoplasm. Its function is as follows. Catalyzes the GTP-dependent ribosomal translocation step during translation elongation. During this step, the ribosome changes from the pre-translocational (PRE) to the post-translocational (POST) state as the newly formed A-site-bound peptidyl-tRNA and P-site-bound deacylated tRNA move to the P and E sites, respectively. Catalyzes the coordinated movement of the two tRNA molecules, the mRNA and conformational changes in the ribosome. In Rickettsia parkeri, this protein is Elongation factor G.